Here is a 466-residue protein sequence, read N- to C-terminus: Peptidoglycan-N-acetylglucosamine deacetylase PgdA (466 aa).

Residues 1-5 (MKIRW) lie on the Cytoplasmic side of the membrane. A helical transmembrane segment spans residues 6–26 (IRLSLVAILIIAVVFIGVIGF). Topologically, residues 27–466 (QKYQFSKSRN…FDKTDSRMVK (440 aa)) are extracellular. In terms of domain architecture, NodB homology spans 266–440 (KRIALTFDDG…KLKSQGYEFV (175 aa)). The Proton acceptor role is filled by Asp273. 3 residues coordinate Zn(2+): Asp274, His324, and His328. A substrate-binding site is contributed by Tyr365. His415 serves as the catalytic Proton donor.

As to quaternary structure, homodimer. Interacts (via transmembrane domain) with PbpA1 (via transmembrane domain); the interaction is important for the peptidoglycan N-deacetylase function of this protein. Requires Zn(2+) as cofactor.

Its subcellular location is the cell membrane. It localises to the secreted. The protein resides in the cell wall. The enzyme catalyses peptidoglycan-N-acetyl-D-glucosamine + H2O = peptidoglycan-D-glucosamine + acetate.. Its function is as follows. Catalyzes the deacetylation of N-acetylglucosamine (GlcNAc) residues in peptidoglycan (PG). Also deacetylates N-acetylated PG. Does not deacetylate N-acetylmuramic acid. Confers host lysozyme resistance. Critical for virulence and escape from innate immune response of the host. Required for intracellular survival of bacteria in macrophages of the host. Required for successful host colonization. Controls the production of inflammatory mediators in the bone marrow derived macrophages (BMMs) of the infected mouse. Suppresses Toll-like receptor 2 (TLR2)-dependent secretion of interleukin 6 (IL-6) and interferon-beta (IFN-beta) in the macrophages of the infected mouse. May decrease accessibility of pattern recognition receptors (PRRs) such as nucleotide-binding oligomerization domain protein (NOD) 1 of the host to the bacterial cell wall components. Protects cells from autolysis induced by lysozyme or by other autolysis-inducing agents. This Listeria monocytogenes serotype 1/2a (strain 10403S) protein is Peptidoglycan-N-acetylglucosamine deacetylase PgdA.